The primary structure comprises 65 residues: DNA-directed RNA polymerase subunit Rpo10 (65 aa).

4 residues coordinate Zn(2+): cysteine 7, cysteine 10, cysteine 44, and cysteine 45.

It belongs to the archaeal Rpo10/eukaryotic RPB10 RNA polymerase subunit family. In terms of assembly, part of the RNA polymerase complex. Zn(2+) serves as cofactor.

The protein resides in the cytoplasm. The enzyme catalyses RNA(n) + a ribonucleoside 5'-triphosphate = RNA(n+1) + diphosphate. Functionally, DNA-dependent RNA polymerase (RNAP) catalyzes the transcription of DNA into RNA using the four ribonucleoside triphosphates as substrates. The chain is DNA-directed RNA polymerase subunit Rpo10 from Nanoarchaeum equitans (strain Kin4-M).